Here is a 497-residue protein sequence, read N- to C-terminus: Lysophospholipid acyltransferase 5 (497 aa).

The next 6 helical transmembrane spans lie at 31 to 51 (LLTI…ISVI), 74 to 94 (GLDT…VLLL), 100 to 120 (IFLA…YFYT), 173 to 193 (LELL…QFPF), 213 to 235 (AGVR…LRYL), and 264 to 286 (SLYK…GLTY). Catalysis depends on residues Asn322 and His358. A helical membrane pass occupies residues 339 to 361 (FLNNRTISYGAALGFLAVWHGYH). Asn398 carries an N-linked (GlcNAc...) asparagine glycan. The next 2 helical transmembrane spans lie at 408–428 (FITL…AFVF) and 435–455 (IVVY…WAAF). A disordered region spans residues 469–497 (KLAGEDQKLQDSNTDKLVEEKKPEDKKSE). The segment covering 470–497 (LAGEDQKLQDSNTDKLVEEKKPEDKKSE) has biased composition (basic and acidic residues). Position 480 is a phosphoserine (Ser480).

The protein belongs to the membrane-bound acyltransferase family. During gastrulation, expressed mainly along the midline in the presumptive mesoderm. During germ band elongation, expressed in mesoderm and endoderm primordia and in the cephalic furrow. Expression in mesoderm and endoderm lineages continues during germ band shortening. At the end of this process, no longer detected in somatic mesoderm or endoderm layer with expression restricted to anterior and posterior domains of the visceral mesoderm.

It is found in the endoplasmic reticulum. The protein localises to the membrane. It catalyses the reaction a 1-acyl-sn-glycero-3-phospho-L-serine + an acyl-CoA = a 1,2-diacyl-sn-glycero-3-phospho-L-serine + CoA. The catalysed reaction is 1-(9Z-octadecenoyl)-sn-glycero-3-phospho-L-serine + (9Z)-hexadecenoyl-CoA = 1-(9Z-octadecenoyl)-2-(9Z-hexadecenoyl)-sn-glycero-3-phospho-L-serine + CoA. The enzyme catalyses a 1-acyl-sn-glycero-3-phosphocholine + an acyl-CoA = a 1,2-diacyl-sn-glycero-3-phosphocholine + CoA. It carries out the reaction 1-hexadecanoyl-sn-glycero-3-phosphocholine + (9Z)-octadecenoyl-CoA = 1-hexadecanoyl-2-(9Z-octadecenoyl)-sn-glycero-3-phosphocholine + CoA. It catalyses the reaction (9Z,12Z)-octadecadienoyl-CoA + 1-hexadecanoyl-sn-glycero-3-phosphocholine = 1-hexadecanoyl-2-(9Z,12Z-octadecadienoyl)-sn-glycero-3-phosphocholine + CoA. The catalysed reaction is (5Z,8Z,11Z,14Z)-eicosatetraenoyl-CoA + 1-hexadecanoyl-sn-glycero-3-phosphocholine = 1-hexadecanoyl-2-(5Z,8Z,11Z,14Z-eicosatetraenoyl)-sn-glycero-3-phosphocholine + CoA. The enzyme catalyses (9Z)-hexadecenoyl-CoA + 1-hexadecanoyl-sn-glycero-3-phosphocholine = 1-hexadecanoyl-2-(9Z-hexadecenoyl)-sn-glycero-3-phosphocholine + CoA. The protein operates within lipid metabolism; phospholipid metabolism. Functionally, acyltransferase that mediates the acylation of lysophospholipids to produce phospholipids (glycerophospholipids). Highest activity with lysophosphatidylcholine (1-acyl-sn-glycero-3-phosphocholine or LPC) producing phosphatidylcholine (1,2-diacyl-sn-glycero-3-phosphocholine or PC) (LPCAT activity), but also converts lysophosphatidylserine (1-acyl-2-hydroxy-sn-glycero-3-phospho-L-serine or LPS) to phosphatidylserine (1,2-diacyl-sn-glycero-3-phospho-L-serine or PS) (LPSAT activity). Has a preference for unsaturated fatty acids of at least 16 carbons such as oleoyl-CoA ((9Z)-octadecenoyl-CoA) and palmitoleoyl-CoA ((9Z)-hexadecenoyl-CoA). Glycerophospholipids are important structural and functional components of cellular membrane, acyl-chain remodeling regulates the molecular species distribution of glycerophospholipids which can affect membrane fluidity and curvature. Essential for fertility and viability together with Oysgedart (Oys). Required for germ cells to migrate into the mesoderm. In Drosophila melanogaster (Fruit fly), this protein is Lysophospholipid acyltransferase 5.